The following is a 263-amino-acid chain: 4-hydroxy-tetrahydrodipicolinate reductase (263 aa).

NAD(+)-binding positions include 7–12, 96–98, and 122–125; these read GFKGRM, GTT, and APNF. The active-site Proton donor/acceptor is H152. Residue H153 coordinates (S)-2,3,4,5-tetrahydrodipicolinate. Catalysis depends on K156, which acts as the Proton donor. 162-163 serves as a coordination point for (S)-2,3,4,5-tetrahydrodipicolinate; sequence GT.

The protein belongs to the DapB family.

It localises to the cytoplasm. It catalyses the reaction (S)-2,3,4,5-tetrahydrodipicolinate + NAD(+) + H2O = (2S,4S)-4-hydroxy-2,3,4,5-tetrahydrodipicolinate + NADH + H(+). The enzyme catalyses (S)-2,3,4,5-tetrahydrodipicolinate + NADP(+) + H2O = (2S,4S)-4-hydroxy-2,3,4,5-tetrahydrodipicolinate + NADPH + H(+). Its pathway is amino-acid biosynthesis; L-lysine biosynthesis via DAP pathway; (S)-tetrahydrodipicolinate from L-aspartate: step 4/4. Functionally, catalyzes the conversion of 4-hydroxy-tetrahydrodipicolinate (HTPA) to tetrahydrodipicolinate. The polypeptide is 4-hydroxy-tetrahydrodipicolinate reductase (Listeria monocytogenes serotype 4b (strain F2365)).